An 89-amino-acid chain; its full sequence is MPRTVFCQYEQRDAEGLDFVPYPGELGQRIFNNIGKQAWAAWLAHQTMLINENRLSPRTPEHRAFLEGELVKFLFEKDAQKPAGFTPEA.

Belongs to the Fe(2+)-trafficking protein family.

Functionally, could be a mediator in iron transactions between iron acquisition and iron-requiring processes, such as synthesis and/or repair of Fe-S clusters in biosynthetic enzymes. The polypeptide is Probable Fe(2+)-trafficking protein (Stenotrophomonas maltophilia (strain K279a)).